Consider the following 219-residue polypeptide: AA11 family lytic polysaccharide monooxygenase A (219 aa).

The N-terminal stretch at 1–18 (MMLSKVVMGLLTASLAAA) is a signal peptide. Residue His19 coordinates Cu(+). Intrachain disulfides connect Cys58–Cys154, Cys94–Cys116, and Cys185–Cys218. N-linked (GlcNAc...) asparagine glycosylation is present at Asn80. His89 provides a ligand contact to Cu(+).

This sequence belongs to the polysaccharide monooxygenase AA11 family. It depends on Cu(2+) as a cofactor.

Functionally, lytic polysaccharide monooxygenase (LPMO) that depolymerizes chitin via the oxidation of scissile beta-(1-4)-glycosidic bonds, yielding C1 or C4 oxidation products. Catalysis by LPMOs requires the reduction of the active-site copper from Cu(II) to Cu(I) by a reducing agent and H(2)O(2) or O(2) as a cosubstrate. Has considerable affinity for alpha-chitin and, more so, beta-chitin. Active toward both alpha-chitin and beta-chitin allomorphs and enhances chitin degradation by an endoacting chitinase, in particular for alpha-chitin, and so plays a role in fungal chitin turnover. The catalytic activity increases when supplying reactions with hydrogen peroxide, confirming that it has peroxygenase activity. Does not show activity on phosphoric acid-swollen cellulose (PASC), Avicel, tamarind xyloglucan, birchwood xylan, beechwood xylan, acetyl glucuronoxylan from aspen, ivory nut mannan, acetylated konjac glucomannan, potato starch, heparin, hyaluronic acid, and chitosan. This Aspergillus fumigatus (strain CBS 144.89 / FGSC A1163 / CEA10) (Neosartorya fumigata) protein is AA11 family lytic polysaccharide monooxygenase A.